A 160-amino-acid polypeptide reads, in one-letter code: uncharacterized protein (160 aa).

This is an uncharacterized protein from Methanocaldococcus jannaschii (strain ATCC 43067 / DSM 2661 / JAL-1 / JCM 10045 / NBRC 100440) (Methanococcus jannaschii).